The chain runs to 321 residues: Fe-S cluster assembly protein DRE2 (321 aa).

Residues Met1–Val131 are N-terminal SAM-like domain. The linker stretch occupies residues Pro132–Met213. Cys223, Cys234, Cys237, and Cys239 together coordinate [2Fe-2S] cluster. The segment at Cys223 to Cys239 is fe-S binding site A. 4 residues coordinate [4Fe-4S] cluster: Cys284, Cys287, Cys295, and Cys298. 2 consecutive short sequence motifs (cx2C motif) follow at residues Cys284–Cys287 and Cys295–Cys298. Residues Cys284–Cys298 are fe-S binding site B.

This sequence belongs to the anamorsin family. In terms of assembly, monomer. Interacts with TAH18. Interacts with MIA40. The cofactor is [2Fe-2S] cluster. It depends on [4Fe-4S] cluster as a cofactor.

The protein localises to the cytoplasm. It localises to the mitochondrion intermembrane space. Its function is as follows. Component of the cytosolic iron-sulfur (Fe-S) protein assembly (CIA) machinery required for the maturation of extramitochondrial Fe-S proteins. Part of an electron transfer chain functioning in an early step of cytosolic Fe-S biogenesis, facilitating the de novo assembly of a [4Fe-4S] cluster on the scaffold complex CFD1-NBP35. Electrons are transferred to DRE2 from NADPH via the FAD- and FMN-containing protein TAH18. TAH18-DRE2 are also required for the assembly of the diferric tyrosyl radical cofactor of ribonucleotide reductase (RNR), probably by providing electrons for reduction during radical cofactor maturation in the catalytic small subunit RNR2. In Coccidioides posadasii (strain C735) (Valley fever fungus), this protein is Fe-S cluster assembly protein DRE2.